Reading from the N-terminus, the 609-residue chain is Altered inheritance of mitochondria protein 9, mitochondrial (609 aa).

A mitochondrion-targeting transit peptide spans 1–24 (MSIIQARCIGNLTRRSIVNVMSRR).

The protein belongs to the AIM9 family.

The protein resides in the mitochondrion. In Meyerozyma guilliermondii (strain ATCC 6260 / CBS 566 / DSM 6381 / JCM 1539 / NBRC 10279 / NRRL Y-324) (Yeast), this protein is Altered inheritance of mitochondria protein 9, mitochondrial (AIM9).